Reading from the N-terminus, the 365-residue chain is Caffeic acid 3-O-methyltransferase (365 aa).

Asparagine 133 contributes to the (E)-ferulate binding site. S-adenosyl-L-homocysteine-binding residues include glycine 210, aspartate 233, aspartate 253, methionine 254, methionine 266, and lysine 267. The active-site Proton acceptor is the histidine 271. Aspartate 272 contacts (E)-5-hydroxyferulate.

Belongs to the class I-like SAM-binding methyltransferase superfamily. Cation-independent O-methyltransferase family. COMT subfamily. Homodimer.

It carries out the reaction (E)-caffeate + S-adenosyl-L-methionine = (E)-ferulate + S-adenosyl-L-homocysteine + H(+). It catalyses the reaction (E)-5-hydroxyferulate + S-adenosyl-L-methionine = (E)-sinapate + S-adenosyl-L-homocysteine + H(+). It functions in the pathway aromatic compound metabolism; phenylpropanoid biosynthesis. Inhibited by Cu(2+), and to a lesser extent by Ni(2+), Mn(2+), Co(2+), Fe(3+) and Zn(2+). Unaffected by Fe(2+) and Mg(2+). Its function is as follows. Catalyzes the conversion of caffeic acid to ferulic acid and of 5-hydroxyferulic acid to sinapic acid. The resulting products may subsequently be converted to the corresponding alcohols that are incorporated into lignins. This chain is Caffeic acid 3-O-methyltransferase, found in Ammi majus (Bishop's weed).